Consider the following 572-residue polypeptide: MKASQFLFATLKETPSDADIASSQLMVRAGLIRKIASGLYIWLPMGLRVLQKVERIVREEMQNIGAQEVLMPMTQPAELWQLTGRFNDYGPELLRFKDRHDRDFVLGPTHEEVITNLAQGELRSYKQLPITFFQIQNKFRDEIRPRFGVMRAREFTMKDAYSFHVDQASLAKTYDEMYDAYTRIFTRLGLDFRAVQADTGSIGGFASHEFHVLADSGEDDIAFSDSSEYAANVELAESVSMAERQPATMARENIDTVNMPTCEAVAEHLNVPLATTVKTLIVQGHTPEGEPQLIAVVLRGDHTLNTIKAEKIEEANVPLMMATEEELKAAGLHKGYIGVELNMPVFVDRAAAALSDFVSGANEINKHTTGMNWERDAHITRIVDIRNVHEGDPSPDGKGTLQIKRGIEVGHIFQLGDKYSQAMNCTVSGEDGKPVTLMMGCYGIGVSRIIAAAIEQNNDENGIMWPSTPDISDSLAPFEVAIVPMKSKEDTVMETATALYEELKALGINVLLDDRNERPGVKFADLELIGIPHRIVVSDRNLAEDKYEYVNRRDSEKQLLSRDEVIAKVSGK.

The protein belongs to the class-II aminoacyl-tRNA synthetase family. ProS type 1 subfamily. Homodimer.

It is found in the cytoplasm. It catalyses the reaction tRNA(Pro) + L-proline + ATP = L-prolyl-tRNA(Pro) + AMP + diphosphate. In terms of biological role, catalyzes the attachment of proline to tRNA(Pro) in a two-step reaction: proline is first activated by ATP to form Pro-AMP and then transferred to the acceptor end of tRNA(Pro). As ProRS can inadvertently accommodate and process non-cognate amino acids such as alanine and cysteine, to avoid such errors it has two additional distinct editing activities against alanine. One activity is designated as 'pretransfer' editing and involves the tRNA(Pro)-independent hydrolysis of activated Ala-AMP. The other activity is designated 'posttransfer' editing and involves deacylation of mischarged Ala-tRNA(Pro). The misacylated Cys-tRNA(Pro) is not edited by ProRS. The protein is Proline--tRNA ligase of Psychrobacter cryohalolentis (strain ATCC BAA-1226 / DSM 17306 / VKM B-2378 / K5).